Consider the following 504-residue polypeptide: Probable GTP-binding protein OBGC2 (504 aa).

A compositionally biased stretch (basic and acidic residues) spans 24–39 (AHRDARPALRLPELHA). Disordered stretches follow at residues 24-46 (AHRD…RRNN) and 93-122 (VLAM…GVKK). The Obg domain occupies 73–276 (HKYFDHAVVT…VSLELILRVV (204 aa)). A compositionally biased stretch (basic residues) spans 107 to 122 (SPRRRSDKGKRSGVKK). Residues 277 to 494 (ADVGLVGLPN…MLKEIRAALR (218 aa)) form the OBG-type G domain. Residues 283-290 (GLPNAGKS) and 337-341 (DLPGL) each bind GTP. Polar residues predominate over residues 436–452 (SEDSLNGNTGEHNTSSE). Residues 436–463 (SEDSLNGNTGEHNTSSETKVEGGEKELR) form a disordered region. Residues 453–463 (TKVEGGEKELR) show a composition bias toward basic and acidic residues.

This sequence belongs to the TRAFAC class OBG-HflX-like GTPase superfamily. OBG GTPase family.

Functionally, may bind GTP and have GTPase activity. This Oryza sativa subsp. japonica (Rice) protein is Probable GTP-binding protein OBGC2.